Reading from the N-terminus, the 157-residue chain is SsrA-binding protein (157 aa).

The segment at 133-157 is disordered; the sequence is LHDKRETAKERDWQRDKARLMRDKG. Residues 135-157 are compositionally biased toward basic and acidic residues; that stretch reads DKRETAKERDWQRDKARLMRDKG.

Belongs to the SmpB family.

The protein localises to the cytoplasm. Its function is as follows. Required for rescue of stalled ribosomes mediated by trans-translation. Binds to transfer-messenger RNA (tmRNA), required for stable association of tmRNA with ribosomes. tmRNA and SmpB together mimic tRNA shape, replacing the anticodon stem-loop with SmpB. tmRNA is encoded by the ssrA gene; the 2 termini fold to resemble tRNA(Ala) and it encodes a 'tag peptide', a short internal open reading frame. During trans-translation Ala-aminoacylated tmRNA acts like a tRNA, entering the A-site of stalled ribosomes, displacing the stalled mRNA. The ribosome then switches to translate the ORF on the tmRNA; the nascent peptide is terminated with the 'tag peptide' encoded by the tmRNA and targeted for degradation. The ribosome is freed to recommence translation, which seems to be the essential function of trans-translation. This Methylobacterium sp. (strain 4-46) protein is SsrA-binding protein.